A 338-amino-acid polypeptide reads, in one-letter code: Ketol-acid reductoisomerase (NADP(+)) (338 aa).

A KARI N-terminal Rossmann domain is found at 1 to 181 (MKVYYDKDCN…GGGRSGIIET (181 aa)). Residues 24-27 (YGSQ), Arg-47, Ser-50, Ser-52, and 82-85 (DETQ) contribute to the NADP(+) site. Residue His-107 is part of the active site. Gly-133 serves as a coordination point for NADP(+). In terms of domain architecture, KARI C-terminal knotted spans 182 to 327 (NFREETETDL…ARLRAMMPWI (146 aa)). The Mg(2+) site is built by Asp-190, Glu-194, Glu-226, and Glu-230. Ser-251 provides a ligand contact to substrate.

The protein belongs to the ketol-acid reductoisomerase family. The cofactor is Mg(2+).

It carries out the reaction (2R)-2,3-dihydroxy-3-methylbutanoate + NADP(+) = (2S)-2-acetolactate + NADPH + H(+). It catalyses the reaction (2R,3R)-2,3-dihydroxy-3-methylpentanoate + NADP(+) = (S)-2-ethyl-2-hydroxy-3-oxobutanoate + NADPH + H(+). The protein operates within amino-acid biosynthesis; L-isoleucine biosynthesis; L-isoleucine from 2-oxobutanoate: step 2/4. Its pathway is amino-acid biosynthesis; L-valine biosynthesis; L-valine from pyruvate: step 2/4. Functionally, involved in the biosynthesis of branched-chain amino acids (BCAA). Catalyzes an alkyl-migration followed by a ketol-acid reduction of (S)-2-acetolactate (S2AL) to yield (R)-2,3-dihydroxy-isovalerate. In the isomerase reaction, S2AL is rearranged via a Mg-dependent methyl migration to produce 3-hydroxy-3-methyl-2-ketobutyrate (HMKB). In the reductase reaction, this 2-ketoacid undergoes a metal-dependent reduction by NADPH to yield (R)-2,3-dihydroxy-isovalerate. In Pelobacter propionicus (strain DSM 2379 / NBRC 103807 / OttBd1), this protein is Ketol-acid reductoisomerase (NADP(+)).